The primary structure comprises 703 residues: Phosphate acetyltransferase (703 aa).

The phosphate acetyltransferase stretch occupies residues Ala-377–Ala-703.

The protein in the N-terminal section; belongs to the CobB/CobQ family. In the C-terminal section; belongs to the phosphate acetyltransferase and butyryltransferase family.

The protein resides in the cytoplasm. It catalyses the reaction acetyl-CoA + phosphate = acetyl phosphate + CoA. It functions in the pathway metabolic intermediate biosynthesis; acetyl-CoA biosynthesis; acetyl-CoA from acetate: step 2/2. Functionally, involved in acetate metabolism. The protein is Phosphate acetyltransferase (pta) of Deinococcus geothermalis (strain DSM 11300 / CIP 105573 / AG-3a).